The following is a 461-amino-acid chain: A-type ATP synthase subunit B (461 aa).

It belongs to the ATPase alpha/beta chains family. In terms of assembly, has multiple subunits with at least A(3), B(3), C, D, E, F, H, I and proteolipid K(x).

It localises to the cell membrane. Its function is as follows. Component of the A-type ATP synthase that produces ATP from ADP in the presence of a proton gradient across the membrane. The B chain is a regulatory subunit. This Nitrosopumilus maritimus (strain SCM1) protein is A-type ATP synthase subunit B.